The primary structure comprises 226 residues: MSWVQAASLIQGPGDKGDVFDEEADESLLAQREWQSNMQRRVKEGYRDGIDAGKAVTLQQGFNQGYKKGAEVILNYGRLRGTLSALLSWCHLHNNNSTLINKINNLLDAVGQCEEYVLKHLKSITPPSHVVDLLDSIEDMDLCHVVPAEKKIDEAKDERLCENNAEFNKNCSKSHSGIDCSYVECCRTQEHAHSENPSPTWILEQTASLVKQLGLSVDVLQHLKQL.

The segment at 45–85 (GYRDGIDAGKAVTLQQGFNQGYKKGAEVILNYGRLRGTLSA) is deca-GX3 motif; required for interaction with LTO1.

In terms of assembly, forms a complex with LTO1.

It localises to the cytoplasm. It is found in the nucleus. Its function is as follows. The complex LTO1:YAE1 functions as a target specific adapter that probably recruits apo-ABCE1 to the cytosolic iron-sulfur protein assembly (CIA) complex machinery. May be required for biogenesis of the large ribosomal subunit and initiation of translation. This is Protein YAE1 homolog from Homo sapiens (Human).